Reading from the N-terminus, the 602-residue chain is ATP-dependent lipid A-core flippase (602 aa).

The next 5 helical transmembrane spans lie at valine 28–leucine 48, leucine 84–leucine 104, isoleucine 158–methionine 178, tryptophan 180–alanine 200, and proline 268–leucine 288. One can recognise an ABC transmembrane type-1 domain in the interval leucine 32 to lysine 323. The ABC transporter domain occupies leucine 355–methionine 591. Glycine 389 to serine 396 lines the ATP pocket.

It belongs to the ABC transporter superfamily. Lipid exporter (TC 3.A.1.106) family. In terms of assembly, homodimer.

Its subcellular location is the cell inner membrane. The enzyme catalyses ATP + H2O + lipid A-core oligosaccharideSide 1 = ADP + phosphate + lipid A-core oligosaccharideSide 2.. Involved in lipopolysaccharide (LPS) biosynthesis. Translocates lipid A-core from the inner to the outer leaflet of the inner membrane. Transmembrane domains (TMD) form a pore in the inner membrane and the ATP-binding domain (NBD) is responsible for energy generation. The chain is ATP-dependent lipid A-core flippase from Pseudomonas putida (strain ATCC 47054 / DSM 6125 / CFBP 8728 / NCIMB 11950 / KT2440).